The following is a 292-amino-acid chain: uncharacterized protein (292 aa).

Residues 1 to 21 form the signal peptide; that stretch reads MNSNSNKKRDPARFPAGVAQG. Residues 1–30 are disordered; it reads MNSNSNKKRDPARFPAGVAQGCSTTRAGDL.

This is an uncharacterized protein from Treponema pallidum (strain Nichols).